We begin with the raw amino-acid sequence, 348 residues long: Phosphate acyltransferase (348 aa).

The protein belongs to the PlsX family. In terms of assembly, homodimer. Probably interacts with PlsY.

It is found in the cytoplasm. It carries out the reaction a fatty acyl-[ACP] + phosphate = an acyl phosphate + holo-[ACP]. The protein operates within lipid metabolism; phospholipid metabolism. Its function is as follows. Catalyzes the reversible formation of acyl-phosphate (acyl-PO(4)) from acyl-[acyl-carrier-protein] (acyl-ACP). This enzyme utilizes acyl-ACP as fatty acyl donor, but not acyl-CoA. The polypeptide is Phosphate acyltransferase (Nitrosomonas europaea (strain ATCC 19718 / CIP 103999 / KCTC 2705 / NBRC 14298)).